The sequence spans 163 residues: Nucleotide-binding protein BPUM_1028 (163 aa).

This sequence belongs to the YajQ family.

Nucleotide-binding protein. The protein is Nucleotide-binding protein BPUM_1028 of Bacillus pumilus (strain SAFR-032).